We begin with the raw amino-acid sequence, 89 residues long: Small ribosomal subunit protein bS20 (89 aa).

The span at 1–11 (MANHKSAEKRN) shows a compositional bias: basic and acidic residues. The tract at residues 1 to 30 (MANHKSAEKRNRQNQVARLRNKSTRTAMKN) is disordered.

Belongs to the bacterial ribosomal protein bS20 family.

Its function is as follows. Binds directly to 16S ribosomal RNA. In Desulfotalea psychrophila (strain LSv54 / DSM 12343), this protein is Small ribosomal subunit protein bS20.